Consider the following 363-residue polypeptide: Carbamoyl phosphate synthase small chain (363 aa).

The CPSase stretch occupies residues 1–172 (MTKRILMLED…AFASPGDGKR (172 aa)). L-glutamine-binding residues include Ser-46, Gly-220, and Gly-222. The Glutamine amidotransferase type-1 domain maps to 172-359 (RVVLVDYGVK…MEMMNGKEEG (188 aa)). Residue Cys-247 is the Nucleophile of the active site. L-glutamine is bound by residues Leu-248, Gln-251, Asn-289, Gly-291, and Tyr-292. Residues His-332 and Glu-334 contribute to the active site.

This sequence belongs to the CarA family. As to quaternary structure, composed of two chains; the small (or glutamine) chain promotes the hydrolysis of glutamine to ammonia, which is used by the large (or ammonia) chain to synthesize carbamoyl phosphate. Tetramer of heterodimers (alpha,beta)4.

The catalysed reaction is hydrogencarbonate + L-glutamine + 2 ATP + H2O = carbamoyl phosphate + L-glutamate + 2 ADP + phosphate + 2 H(+). It carries out the reaction L-glutamine + H2O = L-glutamate + NH4(+). The protein operates within amino-acid biosynthesis; L-arginine biosynthesis; carbamoyl phosphate from bicarbonate: step 1/1. It functions in the pathway pyrimidine metabolism; UMP biosynthesis via de novo pathway; (S)-dihydroorotate from bicarbonate: step 1/3. Small subunit of the glutamine-dependent carbamoyl phosphate synthetase (CPSase). CPSase catalyzes the formation of carbamoyl phosphate from the ammonia moiety of glutamine, carbonate, and phosphate donated by ATP, constituting the first step of 2 biosynthetic pathways, one leading to arginine and/or urea and the other to pyrimidine nucleotides. The small subunit (glutamine amidotransferase) binds and cleaves glutamine to supply the large subunit with the substrate ammonia. This is Carbamoyl phosphate synthase small chain from Listeria monocytogenes serotype 4b (strain F2365).